We begin with the raw amino-acid sequence, 587 residues long: Transport inhibitor response 1-like protein Os05g0150500 (587 aa).

One can recognise an F-box domain in the interval 6–63; it reads SRAACAAAAPPWHSLPDEVWEHAFSFLPAAADRGAAAGACSSWLRAERRSRRRLAVAN. Residue Lys85 coordinates 1D-myo-inositol hexakisphosphate. Positions 92-93 are interaction with auxin-responsive proteins; the sequence is DF. Residues 124 to 125 and Arg355 contribute to the 1D-myo-inositol hexakisphosphate site; that span reads KR. The tract at residues 358-363 is interaction with auxin-responsive proteins; the sequence is PSDPFG. Position 409 to 411 (409 to 411) interacts with 1D-myo-inositol hexakisphosphate; it reads CFR. The interaction with auxin-responsive proteins stretch occupies residues 413–417; the sequence is CILEP. Residue Arg444 participates in 1D-myo-inositol hexakisphosphate binding. The interval 472-473 is interaction with auxin-responsive proteins; sequence AF. Residues 492 to 493 and Arg517 each bind 1D-myo-inositol hexakisphosphate; that span reads KK.

As to quaternary structure, part of a SCF (SKP1-cullin-F-box) protein ligase complex. May interact with auxin and auxin-responsive proteins.

It localises to the nucleus. Its pathway is protein modification; protein ubiquitination. The chain is Transport inhibitor response 1-like protein Os05g0150500 from Oryza sativa subsp. japonica (Rice).